A 477-amino-acid chain; its full sequence is TNF receptor-associated factor family protein DDB_G0278133 (477 aa).

An RING-type; degenerate zinc finger spans residues 45 to 88 (CDICTLELFIESEPKALQCKEGHLACRRCWERYLSTNKQCMTCK). 2 consecutive TRAF-type zinc fingers follow at residues 160 to 211 (NHYK…SSLS) and 212 to 267 (DHHK…SKMQ). The stretch at 271–326 (LEHSVTKLMNQNEIIKKDNQNLDQEKKIEEIKLKLNNLLNNYIQLKNEIAVLKQNS) forms a coiled coil. Residues 331 to 463 (VYSNKWIIPE…FLNEKGELEI (133 aa)) form the MATH domain.

This sequence belongs to the TNF receptor-associated factor family. A subfamily.

The protein resides in the cytoplasm. Its function is as follows. Probable adapter protein and signal transducer that links members of the tumor necrosis factor receptor family to different signaling pathways by association with the receptor cytoplasmic domain and kinases. The chain is TNF receptor-associated factor family protein DDB_G0278133 from Dictyostelium discoideum (Social amoeba).